A 159-amino-acid polypeptide reads, in one-letter code: MKCPFCHTPDTSVIDSRVSEEGDRIRRRRRCPHCDKRFTTYETVELRLPQVVKQDGNRAEFDREKLRTGFVRALHKRPVSAEDVEAAMNRVVQKLLSLGEREIASHKIGEMVMGELYKLDKVAYIRFASVYRSFQGAADFDDAIRELQGSDSRKEPDKP.

A zinc finger lies at 3 to 34 (CPFCHTPDTSVIDSRVSEEGDRIRRRRRCPHC). Residues 49–139 (PQVVKQDGNR…VYRSFQGAAD (91 aa)) form the ATP-cone domain.

Belongs to the NrdR family. It depends on Zn(2+) as a cofactor.

Functionally, negatively regulates transcription of bacterial ribonucleotide reductase nrd genes and operons by binding to NrdR-boxes. The chain is Transcriptional repressor NrdR from Nitrosospira multiformis (strain ATCC 25196 / NCIMB 11849 / C 71).